The chain runs to 225 residues: NAD(P)H-quinone oxidoreductase subunit K, chloroplastic (225 aa).

The [4Fe-4S] cluster site is built by cysteine 43, cysteine 44, cysteine 108, and cysteine 139.

This sequence belongs to the complex I 20 kDa subunit family. NDH is composed of at least 16 different subunits, 5 of which are encoded in the nucleus. Requires [4Fe-4S] cluster as cofactor.

The protein localises to the plastid. Its subcellular location is the chloroplast thylakoid membrane. It carries out the reaction a plastoquinone + NADH + (n+1) H(+)(in) = a plastoquinol + NAD(+) + n H(+)(out). It catalyses the reaction a plastoquinone + NADPH + (n+1) H(+)(in) = a plastoquinol + NADP(+) + n H(+)(out). Its function is as follows. NDH shuttles electrons from NAD(P)H:plastoquinone, via FMN and iron-sulfur (Fe-S) centers, to quinones in the photosynthetic chain and possibly in a chloroplast respiratory chain. The immediate electron acceptor for the enzyme in this species is believed to be plastoquinone. Couples the redox reaction to proton translocation, and thus conserves the redox energy in a proton gradient. This chain is NAD(P)H-quinone oxidoreductase subunit K, chloroplastic, found in Capsella bursa-pastoris (Shepherd's purse).